Reading from the N-terminus, the 218-residue chain is Adenylate kinase (218 aa).

Gly10 to Thr15 is a binding site for ATP. The NMP stretch occupies residues Ser30–Val59. AMP contacts are provided by residues Thr31, Arg36, Gly57–Val59, Gly85–Arg88, and Gln92. The tract at residues Glu122–Asp159 is LID. ATP contacts are provided by residues Arg123 and Ser132–Tyr133. Positions 156 and 167 each coordinate AMP. Gly203 serves as a coordination point for ATP.

Belongs to the adenylate kinase family. Monomer.

It localises to the cytoplasm. It carries out the reaction AMP + ATP = 2 ADP. Its pathway is purine metabolism; AMP biosynthesis via salvage pathway; AMP from ADP: step 1/1. Functionally, catalyzes the reversible transfer of the terminal phosphate group between ATP and AMP. Plays an important role in cellular energy homeostasis and in adenine nucleotide metabolism. The polypeptide is Adenylate kinase (Bordetella pertussis (strain Tohama I / ATCC BAA-589 / NCTC 13251)).